Consider the following 440-residue polypeptide: N-succinylarginine dihydrolase (440 aa).

Substrate contacts are provided by residues 17 to 26 (GGLSPGNLAS), N108, and 135 to 136 (HR). Residues 17–37 (GGLSPGNLASQSHVGEPSHPR) form a disordered region. E172 is a catalytic residue. R210 is a substrate binding site. H246 is an active-site residue. Positions 248 and 358 each coordinate substrate. C364 acts as the Nucleophile in catalysis.

Belongs to the succinylarginine dihydrolase family. As to quaternary structure, homodimer.

The enzyme catalyses N(2)-succinyl-L-arginine + 2 H2O + 2 H(+) = N(2)-succinyl-L-ornithine + 2 NH4(+) + CO2. It functions in the pathway amino-acid degradation; L-arginine degradation via AST pathway; L-glutamate and succinate from L-arginine: step 2/5. Its function is as follows. Catalyzes the hydrolysis of N(2)-succinylarginine into N(2)-succinylornithine, ammonia and CO(2). The chain is N-succinylarginine dihydrolase from Myxococcus xanthus (strain DK1622).